Here is a 123-residue protein sequence, read N- to C-terminus: Small ribosomal subunit protein uS12 (123 aa).

Aspartate 89 bears the 3-methylthioaspartic acid mark.

Belongs to the universal ribosomal protein uS12 family. In terms of assembly, part of the 30S ribosomal subunit. Contacts proteins S8 and S17. May interact with IF1 in the 30S initiation complex.

Functionally, with S4 and S5 plays an important role in translational accuracy. Its function is as follows. Interacts with and stabilizes bases of the 16S rRNA that are involved in tRNA selection in the A site and with the mRNA backbone. Located at the interface of the 30S and 50S subunits, it traverses the body of the 30S subunit contacting proteins on the other side and probably holding the rRNA structure together. The combined cluster of proteins S8, S12 and S17 appears to hold together the shoulder and platform of the 30S subunit. This chain is Small ribosomal subunit protein uS12, found in Rhodopseudomonas palustris (strain BisB18).